Consider the following 89-residue polypeptide: Signal recognition particle 19 kDa protein (89 aa).

It belongs to the SRP19 family. As to quaternary structure, part of the signal recognition particle protein translocation system, which is composed of SRP and FtsY. Archaeal SRP consists of a 7S RNA molecule of 300 nucleotides and two protein subunits: SRP54 and SRP19.

Its subcellular location is the cytoplasm. Involved in targeting and insertion of nascent membrane proteins into the cytoplasmic membrane. Binds directly to 7S RNA and mediates binding of the 54 kDa subunit of the SRP. The sequence is that of Signal recognition particle 19 kDa protein from Methanococcus maripaludis (strain C7 / ATCC BAA-1331).